The primary structure comprises 85 residues: RNA-binding protein Hfq (85 aa).

A Sm domain is found at 9-68 (DPFLNALRRERIPVSIYLVNGIKLQGQIESFDQFVVLLKNTVSQMVYKHAISTVVPARIP).

This sequence belongs to the Hfq family. In terms of assembly, homohexamer.

In terms of biological role, RNA chaperone that binds small regulatory RNA (sRNAs) and mRNAs to facilitate mRNA translational regulation in response to envelope stress, environmental stress and changes in metabolite concentrations. Also binds with high specificity to tRNAs. This Idiomarina loihiensis (strain ATCC BAA-735 / DSM 15497 / L2-TR) protein is RNA-binding protein Hfq.